We begin with the raw amino-acid sequence, 499 residues long: Citrinin biosynthesis cluster MFS transporter mrr1 (499 aa).

The segment at 1–29 is disordered; the sequence is MKEEIDAPVSTDASGTDLENARDQPSGEK. The next 8 membrane-spanning stretches (helical) occupy residues 58–78, 95–115, 124–144, 155–175, 187–207, 215–235, 291–311, and 327–347; these read SLIT…SSVF, VMTL…LVWG, LKPL…VAVA, FFLG…LADF, LFSA…GFIV, WTAW…FLTL, ILVC…LFFV, and GIAA…CLLV. Asn-361 is a glycosylation site (N-linked (GlcNAc...) asparagine). A run of 4 helical transmembrane segments spans residues 370 to 390, 395 to 415, 443 to 463, and 467 to 487; these read LPPM…FGWT, ISWA…LMIW, AVGA…GVDW, and LLGF…FYGA.

This sequence belongs to the major facilitator superfamily. CAR1 family.

It localises to the membrane. MFS transporter; part of the gene cluster that mediates the biosynthesis the mycotoxin citrinin, a hepato-nephrotoxic compound to humans due to inhibition of respiration complex III. In Monascus ruber (Mold), this protein is Citrinin biosynthesis cluster MFS transporter mrr1.